The chain runs to 1358 residues: DNA-directed RNA polymerase subunit beta (1358 aa).

Belongs to the RNA polymerase beta chain family. In terms of assembly, the RNAP catalytic core consists of 2 alpha, 1 beta, 1 beta' and 1 omega subunit. When a sigma factor is associated with the core the holoenzyme is formed, which can initiate transcription.

The enzyme catalyses RNA(n) + a ribonucleoside 5'-triphosphate = RNA(n+1) + diphosphate. Functionally, DNA-dependent RNA polymerase catalyzes the transcription of DNA into RNA using the four ribonucleoside triphosphates as substrates. This Neorickettsia sennetsu (strain ATCC VR-367 / Miyayama) (Ehrlichia sennetsu) protein is DNA-directed RNA polymerase subunit beta.